The primary structure comprises 1173 residues: WASH complex subunit 4 (1173 aa).

Ala2 is subject to N-acetylalanine. Phosphoserine is present on Ser7. The stretch at Gln27–Val56 forms a coiled coil. The sufficient for interaction with WASHC5 stretch occupies residues Lys705–Lys1173. Positions Ala1141 to Lys1155 are enriched in basic and acidic residues. The disordered stretch occupies residues Ala1141–Lys1173. Thr1154 carries the phosphothreonine modification.

Belongs to the SWIP family. Component of the WASH core complex also described as WASH regulatory complex (SHRC) composed of WASH (WASHC1, WASH2P or WASH3P), WASHC2 (WASHC2A or WASHC2C), WASHC3, WASHC4 and WASHC5. The WASH core complex associates via WASHC2 with the F-actin-capping protein dimer (formed by CAPZA1, CAPZA2 or CAPZA3 and CAPZB) in a transient or substoichiometric manner which was initially described as WASH complex.

It is found in the early endosome. Acts as a component of the WASH core complex that functions as a nucleation-promoting factor (NPF) at the surface of endosomes, where it recruits and activates the Arp2/3 complex to induce actin polymerization, playing a key role in the fission of tubules that serve as transport intermediates during endosome sorting. The polypeptide is WASH complex subunit 4 (Mus musculus (Mouse)).